Reading from the N-terminus, the 388-residue chain is Succinate--CoA ligase [ADP-forming] subunit beta (388 aa).

Residues 9 to 244 form the ATP-grasp domain; that stretch reads KSLFAEYGLP…PSQDDAREAH (236 aa). ATP is bound by residues Lys-46, 53-55, Glu-99, Thr-102, and Glu-107; that span reads GRG. Mg(2+)-binding residues include Asn-199 and Asp-213. Residues Asn-264 and 321-323 contribute to the substrate site; that span reads GIV.

The protein belongs to the succinate/malate CoA ligase beta subunit family. In terms of assembly, heterotetramer of two alpha and two beta subunits. It depends on Mg(2+) as a cofactor.

It catalyses the reaction succinate + ATP + CoA = succinyl-CoA + ADP + phosphate. The catalysed reaction is GTP + succinate + CoA = succinyl-CoA + GDP + phosphate. It functions in the pathway carbohydrate metabolism; tricarboxylic acid cycle; succinate from succinyl-CoA (ligase route): step 1/1. In terms of biological role, succinyl-CoA synthetase functions in the citric acid cycle (TCA), coupling the hydrolysis of succinyl-CoA to the synthesis of either ATP or GTP and thus represents the only step of substrate-level phosphorylation in the TCA. The beta subunit provides nucleotide specificity of the enzyme and binds the substrate succinate, while the binding sites for coenzyme A and phosphate are found in the alpha subunit. This Shewanella baltica (strain OS195) protein is Succinate--CoA ligase [ADP-forming] subunit beta.